We begin with the raw amino-acid sequence, 215 residues long: 2-phospho-L-lactate guanylyltransferase (215 aa).

This sequence belongs to the CofC family. As to quaternary structure, homodimer.

It catalyses the reaction (2S)-2-phospholactate + GTP + H(+) = (2S)-lactyl-2-diphospho-5'-guanosine + diphosphate. It participates in cofactor biosynthesis; coenzyme F420 biosynthesis. In terms of biological role, guanylyltransferase that catalyzes the activation of (2S)-2-phospholactate (2-PL) as (2S)-lactyl-2-diphospho-5'-guanosine, via the condensation of 2-PL with GTP. It is involved in the biosynthesis of coenzyme F420, a hydride carrier cofactor. The polypeptide is 2-phospho-L-lactate guanylyltransferase (Methanococcoides burtonii (strain DSM 6242 / NBRC 107633 / OCM 468 / ACE-M)).